A 156-amino-acid polypeptide reads, in one-letter code: Crossover junction endodeoxyribonuclease RuvC (156 aa).

Catalysis depends on residues Asp7, Glu67, and Asp139. Residues Asp7, Glu67, and Asp139 each contribute to the Mg(2+) site.

This sequence belongs to the RuvC family. In terms of assembly, homodimer which binds Holliday junction (HJ) DNA. The HJ becomes 2-fold symmetrical on binding to RuvC with unstacked arms; it has a different conformation from HJ DNA in complex with RuvA. In the full resolvosome a probable DNA-RuvA(4)-RuvB(12)-RuvC(2) complex forms which resolves the HJ. Requires Mg(2+) as cofactor.

It localises to the cytoplasm. The enzyme catalyses Endonucleolytic cleavage at a junction such as a reciprocal single-stranded crossover between two homologous DNA duplexes (Holliday junction).. Functionally, the RuvA-RuvB-RuvC complex processes Holliday junction (HJ) DNA during genetic recombination and DNA repair. Endonuclease that resolves HJ intermediates. Cleaves cruciform DNA by making single-stranded nicks across the HJ at symmetrical positions within the homologous arms, yielding a 5'-phosphate and a 3'-hydroxyl group; requires a central core of homology in the junction. The consensus cleavage sequence is 5'-(A/T)TT(C/G)-3'. Cleavage occurs on the 3'-side of the TT dinucleotide at the point of strand exchange. HJ branch migration catalyzed by RuvA-RuvB allows RuvC to scan DNA until it finds its consensus sequence, where it cleaves and resolves the cruciform DNA. The sequence is that of Crossover junction endodeoxyribonuclease RuvC from Sphingopyxis alaskensis (strain DSM 13593 / LMG 18877 / RB2256) (Sphingomonas alaskensis).